We begin with the raw amino-acid sequence, 421 residues long: Zinc chaperone AztD (421 aa).

Positions 1–29 (MMENIMKKRLLSTSISTLLLGLSVMPAFA) are cleaved as a signal peptide. Zn(2+) contacts are provided by His-101, His-104, Asp-106, His-126, His-169, His-216, and His-405. Cysteines 212 and 229 form a disulfide. Residues 399 to 421 (GGSGKVHGEHHDHEAHHHDDHAH) are disordered. A compositionally biased stretch (basic and acidic residues) spans 404-421 (VHGEHHDHEAHHHDDHAH). Positions 408–419 (HHDHEAHHHDDH) match the N-terminal Zn(2+)-binding motif; binds a third Zn(2+) with low affinity motif.

Monomer.

It localises to the periplasm. Acts as a zinc chaperone in the AztABCD zinc transport system. Directly transfers one zinc cation to the solute binding protein AztC; the transfer occurs without the formation of a stable interaction. Binds 3 Zn(2+), two with high affinity and one with low affinity, and transfers only Zn(2+) bound to site 2 to AztC. This chain is Zinc chaperone AztD, found in Citrobacter koseri (strain ATCC BAA-895 / CDC 4225-83 / SGSC4696).